The sequence spans 854 residues: DNA mismatch repair protein MutS (854 aa).

616–623 (GPNMGGKS) contributes to the ATP binding site.

The protein belongs to the DNA mismatch repair MutS family.

Functionally, this protein is involved in the repair of mismatches in DNA. It is possible that it carries out the mismatch recognition step. This protein has a weak ATPase activity. The polypeptide is DNA mismatch repair protein MutS (Pectobacterium atrosepticum (strain SCRI 1043 / ATCC BAA-672) (Erwinia carotovora subsp. atroseptica)).